Reading from the N-terminus, the 217-residue chain is U exon protein (217 aa).

Disordered regions lie at residues 68-110 and 170-217; these read SKIF…TNHG and EKEA…RQGR. Positions 202 to 217 are enriched in polar residues; it reads GGFQQPTGANQARQGR.

The protein belongs to the adenoviridae U exon protein family.

It is found in the host nucleus. It localises to the host nucleoplasm. The protein resides in the host nucleolus. Its function is as follows. Might play a role in viral replication since it is associated with viral replication centers. Seems to have an effect on DBP localization. This is U exon protein from Homo sapiens (Human).